A 256-amino-acid chain; its full sequence is Acetyl-coenzyme A carboxylase carboxyl transferase subunit alpha (256 aa).

In terms of domain architecture, CoA carboxyltransferase C-terminal spans 1–236 (MTKITRIIKE…KEEIAAELDS (236 aa)).

The protein belongs to the AccA family. As to quaternary structure, acetyl-CoA carboxylase is a heterohexamer composed of biotin carboxyl carrier protein (AccB), biotin carboxylase (AccC) and two subunits each of ACCase subunit alpha (AccA) and ACCase subunit beta (AccD).

The protein localises to the cytoplasm. It carries out the reaction N(6)-carboxybiotinyl-L-lysyl-[protein] + acetyl-CoA = N(6)-biotinyl-L-lysyl-[protein] + malonyl-CoA. The protein operates within lipid metabolism; malonyl-CoA biosynthesis; malonyl-CoA from acetyl-CoA: step 1/1. Its function is as follows. Component of the acetyl coenzyme A carboxylase (ACC) complex. First, biotin carboxylase catalyzes the carboxylation of biotin on its carrier protein (BCCP) and then the CO(2) group is transferred by the carboxyltransferase to acetyl-CoA to form malonyl-CoA. The polypeptide is Acetyl-coenzyme A carboxylase carboxyl transferase subunit alpha (Streptococcus sanguinis (strain SK36)).